We begin with the raw amino-acid sequence, 248 residues long: MQILLEDPAKAPQAEALASQLGQTDLPQFALVFTAARLELRKLDEPKLGAVYVDFVEGAVAHRRKFGGGRGQSIAKAVGLKAGAMPRVVDATAGLGRDAFVLASLGCKVTMIERSPVVAALLQDGLARAALDPEIGPWVRERMQLRHGPAVETLLGLTERPDVIYLDPMFPHKQKSALVKKEMRVFQSLVGPDLDADALLPAALAMADKRVVVKRPDYAGWLNEHKPSMAIETKSNRFDVYVMAALAG.

Residues 97–98 (RD), 113–114 (ER), and aspartate 167 each bind S-adenosyl-L-methionine.

Belongs to the methyltransferase superfamily. RsmJ family.

It localises to the cytoplasm. The catalysed reaction is guanosine(1516) in 16S rRNA + S-adenosyl-L-methionine = N(2)-methylguanosine(1516) in 16S rRNA + S-adenosyl-L-homocysteine + H(+). Its function is as follows. Specifically methylates the guanosine in position 1516 of 16S rRNA. The polypeptide is Ribosomal RNA small subunit methyltransferase J (Aeromonas hydrophila subsp. hydrophila (strain ATCC 7966 / DSM 30187 / BCRC 13018 / CCUG 14551 / JCM 1027 / KCTC 2358 / NCIMB 9240 / NCTC 8049)).